Here is a 412-residue protein sequence, read N- to C-terminus: Divalent metal cation transporter MntH (412 aa).

At methionine 1 to leucine 19 the chain is on the cytoplasmic side. Residues alanine 20–alanine 39 form a helical membrane-spanning segment. At threonine 40–glutamine 51 the chain is on the periplasmic side. Residues leucine 52–alanine 71 traverse the membrane as a helical segment. Topologically, residues lysine 72 to tryptophan 95 are cytoplasmic. The chain crosses the membrane as a helical span at residues phenylalanine 96–isoleucine 118. At glycine 119 to glycine 125 the chain is on the periplasmic side. The chain crosses the membrane as a helical span at residues valine 126 to leucine 145. Over glutamine 146–lysine 155 the chain is Cytoplasmic. Residues valine 156–serine 175 traverse the membrane as a helical segment. The Periplasmic segment spans residues glutamine 176–alanine 196. Residues valine 197 to threonine 220 traverse the membrane as a helical segment. Over glutamine 221–aspartate 238 the chain is Cytoplasmic. Residues valine 239 to alanine 258 form a helical membrane-spanning segment. At alanine 259–tyrosine 276 the chain is on the periplasmic side. A helical transmembrane segment spans residues leucine 277 to alanine 297. Residues alanine 298–arginine 327 are Cytoplasmic-facing. A helical transmembrane segment spans residues arginine 328–aspartate 344. The Periplasmic segment spans residues proline 345–valine 350. A helical transmembrane segment spans residues methionine 351 to phenylalanine 370. At threonine 371–lysine 387 the chain is on the cytoplasmic side. The chain crosses the membrane as a helical span at residues glutamine 388–valine 406. The Periplasmic portion of the chain corresponds to glycine 407–leucine 412.

Belongs to the NRAMP family.

It localises to the cell inner membrane. Functionally, h(+)-stimulated, divalent metal cation uptake system. This is Divalent metal cation transporter MntH from Shigella flexneri serotype 5b (strain 8401).